Here is a 144-residue protein sequence, read N- to C-terminus: Large ribosomal subunit protein uL16 (144 aa).

This sequence belongs to the universal ribosomal protein uL16 family. Part of the 50S ribosomal subunit.

In terms of biological role, binds 23S rRNA and is also seen to make contacts with the A and possibly P site tRNAs. This is Large ribosomal subunit protein uL16 from Thermoanaerobacter sp. (strain X514).